The primary structure comprises 977 residues: ELMO domain-containing protein A (977 aa).

The ELMO domain occupies 383–561; sequence EHDALLMKLW…SVKNLIITAL (179 aa). Composition is skewed to low complexity over residues 792–838 and 852–897; these read SSNN…NNSG and QQQQ…SSSS. Residues 792–899 form a disordered region; sequence SSNNNIKDNL…SSSSSSSSNP (108 aa).

As to quaternary structure, associates with mhcA.

Functionally, functions as a negative regulator of actin polymerization. Modulates actin/myosin II at cortex actinomyosins to prevent excessive F-actin polymerization around the cell periphery, thereby maintaining proper cell shape during phagocytosis and chemotaxis. This chain is ELMO domain-containing protein A (elmoA), found in Dictyostelium discoideum (Social amoeba).